We begin with the raw amino-acid sequence, 391 residues long: GTPase Obg (391 aa).

In terms of domain architecture, Obg spans 1–159; sequence MKFVDEASIL…RDLLLELMLL (159 aa). Residues 127–147 form a disordered region; the sequence is NTRFKSSVNRTPRQKTNGTPG. Residues 129–145 are compositionally biased toward polar residues; the sequence is RFKSSVNRTPRQKTNGT. The OBG-type G domain maps to 160-333; sequence ADVGMLGMPN…LCWDVMTFII (174 aa). Residues 166-173, 191-195, 213-216, 283-286, and 314-316 each bind GTP; these read GMPNAGKS, FTTLV, DIPG, NKID, and SAA. Serine 173 and threonine 193 together coordinate Mg(2+).

It belongs to the TRAFAC class OBG-HflX-like GTPase superfamily. OBG GTPase family. Monomer. It depends on Mg(2+) as a cofactor.

Its subcellular location is the cytoplasm. Functionally, an essential GTPase which binds GTP, GDP and possibly (p)ppGpp with moderate affinity, with high nucleotide exchange rates and a fairly low GTP hydrolysis rate. Plays a role in control of the cell cycle, stress response, ribosome biogenesis and in those bacteria that undergo differentiation, in morphogenesis control. The protein is GTPase Obg of Salmonella arizonae (strain ATCC BAA-731 / CDC346-86 / RSK2980).